The primary structure comprises 38 residues: Photosystem II reaction center protein L (38 aa).

Residues 17 to 37 traverse the membrane as a helical segment; that stretch reads SLYWGLLLIFVLAVLFSSYIF.

The protein belongs to the PsbL family. As to quaternary structure, PSII is composed of 1 copy each of membrane proteins PsbA, PsbB, PsbC, PsbD, PsbE, PsbF, PsbH, PsbI, PsbJ, PsbK, PsbL, PsbM, PsbT, PsbX, PsbY, PsbZ, Psb30/Ycf12, at least 3 peripheral proteins of the oxygen-evolving complex and a large number of cofactors. It forms dimeric complexes.

The protein resides in the plastid. The protein localises to the chloroplast thylakoid membrane. Functionally, one of the components of the core complex of photosystem II (PSII). PSII is a light-driven water:plastoquinone oxidoreductase that uses light energy to abstract electrons from H(2)O, generating O(2) and a proton gradient subsequently used for ATP formation. It consists of a core antenna complex that captures photons, and an electron transfer chain that converts photonic excitation into a charge separation. This subunit is found at the monomer-monomer interface and is required for correct PSII assembly and/or dimerization. This Tetradesmus obliquus (Green alga) protein is Photosystem II reaction center protein L.